The chain runs to 228 residues: Flagellar L-ring protein (228 aa).

The N-terminal stretch at 1-17 is a signal peptide; that stretch reads MHYLRYFAIAFLLLLSS. Cys18 carries N-palmitoyl cysteine lipidation. The S-diacylglycerol cysteine moiety is linked to residue Cys18.

It belongs to the FlgH family. As to quaternary structure, the basal body constitutes a major portion of the flagellar organelle and consists of four rings (L,P,S, and M) mounted on a central rod.

It is found in the cell membrane. The protein localises to the bacterial flagellum basal body. Assembles around the rod to form the L-ring and probably protects the motor/basal body from shearing forces during rotation. The chain is Flagellar L-ring protein from Wigglesworthia glossinidia brevipalpis.